The following is a 602-amino-acid chain: Alpha-(1-&gt;6)-mannopyranosyltransferase B (602 aa).

Transmembrane regions (helical) follow at residues 105–125 (IGTM…ALPV), 148–168 (MIVL…APLV), 190–210 (TFGA…QDIY), 244–264 (VPFI…SIAA), 274–294 (IVGG…AAGW), 320–340 (LILH…FLLV), 368–388 (GVLI…LGFV), 404–424 (VVAI…TVVV), 448–468 (WMSM…NLGL), 472–492 (TAAM…AFMV), 503–523 (IHAV…FPVV), 546–566 (LGVI…GLAL), and 571–591 (VFSI…VGWW).

It belongs to the MptA/B family.

It localises to the membrane. It participates in cell wall biogenesis; cell wall polysaccharide biosynthesis. Involved in the initiation of core alpha-(1-&gt;6) mannan biosynthesis of lipomannan (LM-A) and multi-mannosylated polymer (LM-B), extending triacylatedphosphatidyl-myo-inositol dimannoside (Ac1PIM2) and mannosylated glycolipid, 1,2-di-O-C16/C18:1-(alpha-D-mannopyranosyl)-(1-&gt;4)-(alpha-D-glucopyranosyluronic acid)-(1-&gt;3)-glycerol (Man1GlcAGroAc2), respectively. Catalyzes the addition of alpha-(1-&gt;6)-mannose residue. The polypeptide is Alpha-(1-&gt;6)-mannopyranosyltransferase B (mptB) (Corynebacterium glutamicum (strain ATCC 13032 / DSM 20300 / JCM 1318 / BCRC 11384 / CCUG 27702 / LMG 3730 / NBRC 12168 / NCIMB 10025 / NRRL B-2784 / 534)).